The sequence spans 111 residues: MVMLNKTITSAKSAGEDREAGYVGKVLKVFPDEQRVIVEGVNVRVFHEKPSRSNREGGRTEREAPIHVSNVNPIDSNGESTRIGRKKVEDPDTGRSRWVRYAKTTGEELDD.

Residues 48-65 are compositionally biased toward basic and acidic residues; sequence EKPSRSNREGGRTEREAP. The interval 48–111 is disordered; the sequence is EKPSRSNREG…AKTTGEELDD (64 aa). Over residues 69-80 the composition is skewed to polar residues; sequence SNVNPIDSNGES. The span at 86-95 shows a compositional bias: basic and acidic residues; the sequence is KKVEDPDTGR.

The protein belongs to the universal ribosomal protein uL24 family. Part of the 50S ribosomal subunit.

Its function is as follows. One of two assembly initiator proteins, it binds directly to the 5'-end of the 23S rRNA, where it nucleates assembly of the 50S subunit. One of the proteins that surrounds the polypeptide exit tunnel on the outside of the subunit. In Salinibacter ruber (strain DSM 13855 / M31), this protein is Large ribosomal subunit protein uL24.